Consider the following 118-residue polypeptide: Non-specific lipid-transfer protein 3 (118 aa).

An N-terminal signal peptide occupies residues Met-1–Ala-25. 4 disulfide bridges follow: Cys-29–Cys-77, Cys-39–Cys-54, Cys-55–Cys-100, and Cys-75–Cys-114.

The protein belongs to the plant LTP family.

In terms of biological role, plant non-specific lipid-transfer proteins transfer phospholipids as well as galactolipids across membranes. May play a role in wax or cutin deposition in the cell walls of expanding epidermal cells and certain secretory tissues. The chain is Non-specific lipid-transfer protein 3 (LTP3) from Hordeum vulgare (Barley).